A 452-amino-acid chain; its full sequence is MSATKSAGPTTLANHLDKEVKTDVLGAIDSDKLTEATQGDHKAINEEYKIWKKNSPYLYNVVIATVMDHPTLTVEWLPDLFDDITPGSMSARLMFGSHSSGLDKDYIHVASVELPTHLRPETIGLLSQQEGGTDMKQHHDAHGRHKRIAIVQSIYEDGEVNVARYNPLASKQIAAAHVTGDIHIFDRNNIMNSKEEAKPIYNLKHHTKEGWGLNWNINHADQLVSGAIDSTVAFWKIPEAASDGSCKDVTPHTVYHHDAAVNDVKFSYKMDFLIGSASDDCTLRLWDTRKPGNKAACTIKESRGINSLDFNPHSEFLVATGSADETVKVWDMRKMDTPISQLYSHCDEVTKVQWCPHQPSVLASGGHDRAILVWDIARLHDDLSSDENDEGPPELLFHHGGHSSRISDFDWHPTLPWVIASAAEDNVIQVWRMAESISNDEAVPADDVDMED.

WD repeat units lie at residues 155-195 (YEDG…NSKE), 205-245 (HHTK…SDGS), 256-296 (HHDA…NKAA), 300-340 (KESR…TPIS), 344-384 (SHCD…DDLS), and 401-441 (GHSS…SNDE).

This sequence belongs to the WD repeat RBAP46/RBAP48/MSI1 family. Component of the HAT-B complex composed of at least HAT1 and HAT2. The HAT-B complex binds to histone H4 tail.

The protein localises to the cytoplasm. Its subcellular location is the nucleus. In terms of biological role, regulatory subunit of the histone acetylase B (HAT-B) complex. The complex acetylates 'Lys-12' of histone H4 which is required for telomeric silencing. This is Histone acetyltransferase type B subunit 2 (HAT2) from Yarrowia lipolytica (strain CLIB 122 / E 150) (Yeast).